Consider the following 50-residue polypeptide: Small ribosomal subunit protein uS14 (50 aa).

Positions 15, 18, 33, and 36 each coordinate Zn(2+).

The protein belongs to the universal ribosomal protein uS14 family. Zinc-binding uS14 subfamily. As to quaternary structure, part of the 30S ribosomal subunit. Zn(2+) is required as a cofactor.

In terms of biological role, binds 16S rRNA, required for the assembly of 30S particles. This is Small ribosomal subunit protein uS14 from Methanosarcina barkeri (strain Fusaro / DSM 804).